The chain runs to 212 residues: Ras-related protein Rab-2A (212 aa).

At Ala-2 the chain carries N-acetylalanine. Residues 2-19 (AYAYLFKYIIIGDTGVGK) form a required for interaction with PRKCI region. Residues Gly-16, Val-17, Gly-18, Lys-19, Ser-20, Cys-21, and Thr-38 each coordinate GTP. Residue Ser-20 participates in Mg(2+) binding. Positions 37 to 42 (LTIGVE) match the Switch 1 motif. Thr-38 and Asp-61 together coordinate Mg(2+). A Switch 2 motif is present at residues 63 to 72 (AGQESFRSIT). Positions 64, 119, 120, 122, 150, and 151 each coordinate GTP. Residues Cys-211 and Cys-212 are each lipidated (S-geranylgeranyl cysteine).

The protein belongs to the small GTPase superfamily. Rab family. In terms of assembly, interacts with PRKCI. Interacts with TRIP11. Interacts (in GTP-bound form) with GARIN1B. Interacts (GTP-bound) with HOPS complex component VPS39; interaction contributes to obtaining a functional HOPS complex that promotes autophagosome-lysosome membrane fusion driven by STX17-SNAP29-VAMP8. May interact with VPS41. Mg(2+) is required as a cofactor. Prenylated. Prenylation is required for association with cellular membranes.

Its subcellular location is the endoplasmic reticulum-Golgi intermediate compartment membrane. The protein localises to the melanosome. The protein resides in the endoplasmic reticulum membrane. It localises to the golgi apparatus membrane. It is found in the cytoplasmic vesicle. Its subcellular location is the secretory vesicle. The protein localises to the acrosome. The protein resides in the autophagosome membrane. The catalysed reaction is GTP + H2O = GDP + phosphate + H(+). Its activity is regulated as follows. Regulated by guanine nucleotide exchange factors (GEFs) which promote the exchange of bound GDP for free GTP, GTPase activating proteins (GAPs) which increase the GTP hydrolysis activity, and GDP dissociation inhibitors (GDIs) which inhibit the dissociation of the nucleotide from the GTPase. Its function is as follows. The small GTPases Rab are key regulators of intracellular membrane trafficking, from the formation of transport vesicles to their fusion with membranes. Rabs cycle between active GTP-bound and inactive GDP-bound states. In their active state, drive transport of vesicular carriers from donor organelles to acceptor organelles to regulate the membrane traffic that maintains organelle identity and morphology. RAB2A regulates autophagy by promoting autophagosome-lysosome fusion via recruitment of the HOPS endosomal tethering complex; this process involves autophagosomal RAB2A and lysosomal RAB39A recruitment of HOPS subcomplexes VPS39-VPS11 and VPS41-VPS16-VPS18-VPS33A, respectively, which assemble into a functional complex to mediate membrane tethering and SNAREs-driven membrane fusion. Required for protein transport from the endoplasmic reticulum to the Golgi complex. Regulates the compacted morphology of the Golgi. Together with RAB2B, redundantly required for efficient autophagic flux. The polypeptide is Ras-related protein Rab-2A (RAB2A) (Canis lupus familiaris (Dog)).